The primary structure comprises 243 residues: Cell division protein ZipA (243 aa).

Residues 1–4 lie on the Periplasmic side of the membrane; it reads MSDM. The chain crosses the membrane as a helical span at residues 5-25; it reads AMIRIGILIAGLLLVAAIFLF. Over 26–243 the chain is Cytoplasmic; that stretch reads GRPKKSPQGR…APPLTKSPRW (218 aa). The tract at residues 30-89 is disordered; that stretch reads KSPQGRRVDKGEGQPRERREPVISSEFGAEGDAAERAEGVEQSELNLEGQDASGGNEVGK. Basic and acidic residues predominate over residues 35–50; that stretch reads RRVDKGEGQPRERREP.

It belongs to the ZipA family. As to quaternary structure, interacts with FtsZ via their C-terminal domains.

The protein resides in the cell inner membrane. Functionally, essential cell division protein that stabilizes the FtsZ protofilaments by cross-linking them and that serves as a cytoplasmic membrane anchor for the Z ring. Also required for the recruitment to the septal ring of downstream cell division proteins. This chain is Cell division protein ZipA, found in Xanthomonas axonopodis pv. citri (strain 306).